Here is a 369-residue protein sequence, read N- to C-terminus: tRNA(Met) cytidine acetate ligase (369 aa).

Residues 7–20 (VAEF…HKYL), Gly-96, Asn-152, and Arg-175 each bind ATP.

Belongs to the TmcAL family.

The protein localises to the cytoplasm. It carries out the reaction cytidine(34) in elongator tRNA(Met) + acetate + ATP = N(4)-acetylcytidine(34) in elongator tRNA(Met) + AMP + diphosphate. In terms of biological role, catalyzes the formation of N(4)-acetylcytidine (ac(4)C) at the wobble position of elongator tRNA(Met), using acetate and ATP as substrates. First activates an acetate ion to form acetyladenylate (Ac-AMP) and then transfers the acetyl group to tRNA to form ac(4)C34. The protein is tRNA(Met) cytidine acetate ligase of Streptococcus agalactiae serotype Ia (strain ATCC 27591 / A909 / CDC SS700).